The following is a 114-amino-acid chain: Large ribosomal subunit protein uL22 (114 aa).

Belongs to the universal ribosomal protein uL22 family. As to quaternary structure, part of the 50S ribosomal subunit.

This protein binds specifically to 23S rRNA; its binding is stimulated by other ribosomal proteins, e.g. L4, L17, and L20. It is important during the early stages of 50S assembly. It makes multiple contacts with different domains of the 23S rRNA in the assembled 50S subunit and ribosome. Its function is as follows. The globular domain of the protein is located near the polypeptide exit tunnel on the outside of the subunit, while an extended beta-hairpin is found that lines the wall of the exit tunnel in the center of the 70S ribosome. The sequence is that of Large ribosomal subunit protein uL22 from Alcanivorax borkumensis (strain ATCC 700651 / DSM 11573 / NCIMB 13689 / SK2).